Consider the following 229-residue polypeptide: MIQTTFPDRAVMAELLAKMLWEIKAVHFNAAQPYKLSSGMASPVYIDCRKLLSFPRIRSTVMDFAASTLLRDAGFEQFDCIAGGETAGIPFAALLADRLSLPMIYVRKQPKGHGRNAQIEGNMPEGSRVLVIEDLTTAGGSMFKFIDAIRAAGGIVDHGIALFFYGIFGEERFADGKVRLHHIATWRNVLAVAKEQKLFDDKTLSEVEAFLDAPLAWSGRNGGVSELSL.

5-phospho-alpha-D-ribose 1-diphosphate contacts are provided by residues R107, K108, K111, H113, and 133 to 141; that span reads EDLTTAGGS. Orotate is bound at residue T137.

It belongs to the purine/pyrimidine phosphoribosyltransferase family. PyrE subfamily. As to quaternary structure, homodimer. It depends on Mg(2+) as a cofactor.

It carries out the reaction orotidine 5'-phosphate + diphosphate = orotate + 5-phospho-alpha-D-ribose 1-diphosphate. Its pathway is pyrimidine metabolism; UMP biosynthesis via de novo pathway; UMP from orotate: step 1/2. Its function is as follows. Catalyzes the transfer of a ribosyl phosphate group from 5-phosphoribose 1-diphosphate to orotate, leading to the formation of orotidine monophosphate (OMP). The chain is Orotate phosphoribosyltransferase from Rhizobium johnstonii (strain DSM 114642 / LMG 32736 / 3841) (Rhizobium leguminosarum bv. viciae).